The sequence spans 468 residues: UDP-N-acetylmuramate--L-alanine ligase (468 aa).

Residue 114-120 (GTHGKTT) coordinates ATP.

This sequence belongs to the MurCDEF family.

Its subcellular location is the cytoplasm. The catalysed reaction is UDP-N-acetyl-alpha-D-muramate + L-alanine + ATP = UDP-N-acetyl-alpha-D-muramoyl-L-alanine + ADP + phosphate + H(+). The protein operates within cell wall biogenesis; peptidoglycan biosynthesis. Cell wall formation. The polypeptide is UDP-N-acetylmuramate--L-alanine ligase (Methylocella silvestris (strain DSM 15510 / CIP 108128 / LMG 27833 / NCIMB 13906 / BL2)).